The following is a 506-amino-acid chain: Histidine ammonia-lyase (506 aa).

The 5-imidazolinone (Ala-Gly) cross-link spans 143–145 (ASG). Serine 144 is modified (2,3-didehydroalanine (Ser)).

It belongs to the PAL/histidase family. In terms of processing, contains an active site 4-methylidene-imidazol-5-one (MIO), which is formed autocatalytically by cyclization and dehydration of residues Ala-Ser-Gly.

It is found in the cytoplasm. It catalyses the reaction L-histidine = trans-urocanate + NH4(+). It participates in amino-acid degradation; L-histidine degradation into L-glutamate; N-formimidoyl-L-glutamate from L-histidine: step 1/3. The sequence is that of Histidine ammonia-lyase from Salmonella choleraesuis (strain SC-B67).